Reading from the N-terminus, the 369-residue chain is Molybdenum import ATP-binding protein ModC 1 (369 aa).

In terms of domain architecture, ABC transporter spans 10-240 (KGYIEVAFNG…PALASRSEAA (231 aa)). An ATP-binding site is contributed by 42–49 (GPPGCGKT). Residues 297–367 (ASSILNVFRA…ELCGKLGDDG (71 aa)) form the Mop domain.

The protein belongs to the ABC transporter superfamily. Molybdate importer (TC 3.A.1.8) family. In terms of assembly, the complex is composed of two ATP-binding proteins (ModC), two transmembrane proteins (ModB) and a solute-binding protein (ModA).

The protein localises to the cell inner membrane. The catalysed reaction is molybdate(out) + ATP + H2O = molybdate(in) + ADP + phosphate + H(+). Its function is as follows. Part of the ABC transporter complex ModABC involved in molybdenum import. Responsible for energy coupling to the transport system. The protein is Molybdenum import ATP-binding protein ModC 1 of Bradyrhizobium diazoefficiens (strain JCM 10833 / BCRC 13528 / IAM 13628 / NBRC 14792 / USDA 110).